Here is a 346-residue protein sequence, read N- to C-terminus: Protein SHI RELATED SEQUENCE 5 (346 aa).

A disordered region spans residues 7–31; the sequence is LGGRDNNSNNNKQDHHQVDKDHHHQ. A compositionally biased stretch (basic and acidic residues) spans 18 to 31; it reads KQDHHQVDKDHHHQ. Residues cysteine 125, cysteine 128, cysteine 136, cysteine 141, cysteine 145, and cysteine 152 each contribute to the Zn(2+) site. The zn(2)-C6 fungal-type; degenerate DNA-binding region spans 125–152; it reads CQDCGNQAKKDCPHMRCRTCCKSRGFHC. The segment covering 175–186 has biased composition (polar residues); sequence SLQHHSASSRET. Residues 175–215 form a disordered region; sequence SLQHHSASSRETQNAKRLREASGGDNNDDKDHSGGGGSALA. Residues 187 to 207 are compositionally biased toward basic and acidic residues; that stretch reads QNAKRLREASGGDNNDDKDHS. A Required for homo- and heterodimerization motif is present at residues 269-272; it reads IGGH.

Belongs to the SHI protein family.

It is found in the nucleus. In terms of biological role, transcription activator that binds DNA on 5'-ACTCTAC-3' and promotes auxin homeostasis-regulating gene expression (e.g. YUC genes), as well as genes affecting stamen development, cell expansion and timing of flowering. Synergistically with other SHI-related proteins, regulates gynoecium, stamen and leaf development in a dose-dependent manner, controlling apical-basal patterning. Promotes style and stigma formation, and influences vascular development during gynoecium development. May also have a role in the formation and/or maintenance of the shoot apical meristem (SAM). This is Protein SHI RELATED SEQUENCE 5 (SRS5) from Arabidopsis thaliana (Mouse-ear cress).